We begin with the raw amino-acid sequence, 598 residues long: F-box/WD repeat-containing protein 8 (598 aa).

M1 carries the post-translational modification N-acetylmethionine. The disordered stretch occupies residues S20–P97. The segment covering L29–A44 has biased composition (basic and acidic residues). The span at G51–R65 shows a compositional bias: low complexity. The span at R73–T93 shows a compositional bias: basic and acidic residues. S84 carries the phosphoserine modification. S86 is subject to Phosphoserine; by MTOR. The 47-residue stretch at P113–L159 folds into the F-box domain. WD repeat units lie at residues A201 to E250, Q259 to D299, A300 to E340, V341 to V383, Y384 to G429, N430 to Q475, L476 to S513, and R514 to F561.

In terms of assembly, component of the Cul7-RING(FBXW8) complex consisting of CUL7, RBX1, SKP1 and FBXW8; within the complex interacts with CUL7 and SKP1. Interacts with GLMN isoform 1. Interacts with OBSL1, CUL1, CUL2, CCT6B, PFDN5, CCT2, CCT3, CCT6A, CCT7, VBP1, CCDC8, ARF1, TRIP13, PDCD5 and GORASP1. Interacts with MAP4K1/HPK1 (when autophosphorylated). Associated component of the 3M complex. Interacts with POUF51 (when phosphorylated on 'Ser-347'). In terms of processing, phosphorylation at Ser-86 by mTORC2 promotes FBXW8 stabilization, allowing its translocation to the cytosol in response to insulin. As to expression, widely expressed. Expressed at higher level in skeletal muscle, cartilage and lung.

Its subcellular location is the cytoplasm. It is found in the perinuclear region. It localises to the golgi apparatus. The protein localises to the cytosol. Its pathway is protein modification; protein ubiquitination. Functionally, substrate-recognition component of the Cul7-RING(FBXW8) ubiquitin ligase complex, which mediates the ubiquitination and subsequent proteasomal degradation of target proteins. The Cul7-RING(FBXW8) complex mediates ubiquitination and consequent degradation of GORASP1, acting as a component of the ubiquitin ligase pathway that regulates Golgi morphogenesis and dendrite patterning in brain. Mediates ubiquitination and degradation of IRS1 in a mTOR-dependent manner: the Cul7-RING(FBXW8) complex recognizes and binds IRS1 previously phosphorylated by S6 kinase (RPS6KB1 or RPS6KB2). The Cul7-RING(FBXW8) complex also mediates ubiquitination of MAP4K1/HPK1: recognizes and binds autophosphorylated MAP4K1/HPK1, leading to its degradation, thereby affecting cell proliferation and differentiation. The Cul7-RING(FBXW8) complex also mediates ubiquitination of phosphorylated cyclin-D1 (CCND1). The Cul7-RING(FBXW8) complex is however not a major regulator of CCND1 stability during the G1/S transition. Associated component of the 3M complex, suggesting that it mediates some of 3M complex functions. The protein is F-box/WD repeat-containing protein 8 (Fbxw8) of Mus musculus (Mouse).